A 696-amino-acid polypeptide reads, in one-letter code: Verrucotoxin subunit beta (696 aa).

A B30.2/SPRY domain is found at 506 to 696 (HMPGVETIKD…GCTTESQWSN (191 aa)).

Belongs to the SNTX/VTX toxin family. In terms of assembly, tetramer composed of 2 alpha and 2 beta subunits. Glycosylated. In terms of tissue distribution, expressed by the venom gland.

The protein resides in the secreted. This lethal (towards mice) toxin induces hemolytic, cytolytic and hypotensive activities. Inhibits calcium channels and may activate ATP-sensitive potassium channels in frog atrial heart muscle. In guinea-pig ventricular myocytes, it modulates calcium channel activity through the beta-adrenoceptor-cAMP-PKA pathway (ADRB). This chain is Verrucotoxin subunit beta, found in Synanceia verrucosa (Reef stonefish).